A 253-amino-acid polypeptide reads, in one-letter code: Small ribosomal subunit protein eS4 (253 aa).

An S4 RNA-binding domain is found at 43–114 (LPLLLIVRNV…YPVKFFKLHP (72 aa)).

It belongs to the eukaryotic ribosomal protein eS4 family.

This chain is Small ribosomal subunit protein eS4 (rps4e), found in Aeropyrum pernix (strain ATCC 700893 / DSM 11879 / JCM 9820 / NBRC 100138 / K1).